The chain runs to 395 residues: Cyclomarin C epoxidase CymV (395 aa).

It belongs to the cytochrome P450 family.

Its function is as follows. Cytochrome P450; part of the gene cluster that mediates the biosynthesis of cyclic heptapeptides, known as cyclomarins and also of cyclic dipeptides, called cyclomarazines, which have both antimicrobial and cytotoxic effects. First, CymD catalyzes the reverse N-prenylation of monomeric L-tryptophan with dimethylallyl diphosphate (DMAPP) to form N-(1,1-dimethylallyl)-tryptophan (r-N-DMAT). The N-(1,1-dimethylallyl)-tryptophan produced by CymD is then combined with a range of standard and nonproteinogenic amino acid substrates to synthesize the peptides, a process that is probably catalyzed by the non-canonical nonribosomal peptide synthetase (NRPS), CymA. Other proteins in the cluster catalyze further modifications of the peptides including CymV which catalyzes the oxidation of olefinic cyclomarins and cyclomarazines to their respective epoxide derivatives. The sequence is that of Cyclomarin C epoxidase CymV from Salinispora arenicola (strain CNS-205).